The sequence spans 509 residues: MEEIQRYLQLDRSQQHNFLYPLIFQEYIYALAHDPGLNRNRSILLENPGSNNKFSFLIVKRLITRMYQQNHFLISTNDFNKNSFLGCNKNLYSQMISEGFAFIVEIPFSLRLISSLSSFEGKKIFKSHNLRSIHSTFPFLEDNFAHLNYVLDILIPYPVHLEILVQTLRYWVKDASSLHLLRFFLHEYWNLNSLITSKKPGYSFSKKNQRFFFFLYNSYVYECESTFVFLRNQSSHLRSTSFGALLERIFFYGKIERLVEVFAKDFQVTLWLFKDPFMHYVRYQGKSILASKGTFLLINKWKFYLVNFWQCHFSLCFHTGRIHINQLSNHSRDFMGYLSSVRLNPSMVRSQMLENSFLINNAIKKFDTLVPIIPLIGSLAKANFCTVLGHPISKPVWSDLSDSDIIARFGRICRNLFHYYSGSSKKKTLYRIKYILRLSCARTLARKHKSTVRTFLKRSGSELLEEFLTSEEQVLSLTFPRASSSLGGVYRSRIWYLDIFCINDLANSQ.

The protein belongs to the intron maturase 2 family. MatK subfamily.

The protein localises to the plastid. Its subcellular location is the chloroplast. Functionally, usually encoded in the trnK tRNA gene intron. Probably assists in splicing its own and other chloroplast group II introns. The sequence is that of Maturase K from Nicotiana bigelovii (Bigelov's tobacco).